A 196-amino-acid polypeptide reads, in one-letter code: uncharacterized protein (196 aa).

An HD domain is found at 51-164 (VAEHSLLVEE…DRIFGKPDPV (114 aa)).

This is an uncharacterized protein from Rhodobacter capsulatus (strain ATCC BAA-309 / NBRC 16581 / SB1003).